The chain runs to 466 residues: Asparagine--tRNA ligase (466 aa).

It belongs to the class-II aminoacyl-tRNA synthetase family. In terms of assembly, homodimer.

It localises to the cytoplasm. It catalyses the reaction tRNA(Asn) + L-asparagine + ATP = L-asparaginyl-tRNA(Asn) + AMP + diphosphate + H(+). The protein is Asparagine--tRNA ligase of Yersinia enterocolitica serotype O:8 / biotype 1B (strain NCTC 13174 / 8081).